The following is a 552-amino-acid chain: Putative transport protein HAPS_0158 (552 aa).

Helical transmembrane passes span 4 to 24 (IALT…IGHI), 28 to 48 (GVSL…HFMT), 65 to 85 (FGLI…FFAS), 95 to 115 (AFAV…HKIF), and 157 to 177 (MGYA…MWLI). RCK C-terminal domains are found at residues 193–275 (DSAT…ILGE) and 277–360 (VNVS…IIGN). Transmembrane regions (helical) follow at residues 370–390 (MLPI…PIYL), 393–413 (FPVA…LILA), 438–458 (IVLF…NTLL), 463–483 (LAWI…TGLV), 492–512 (YLSL…LAFA), and 532–552 (LVMF…WVAG).

This sequence belongs to the AAE transporter (TC 2.A.81) family. YidE subfamily.

It is found in the cell membrane. The polypeptide is Putative transport protein HAPS_0158 (Glaesserella parasuis serovar 5 (strain SH0165) (Haemophilus parasuis)).